We begin with the raw amino-acid sequence, 291 residues long: 3-hydroxy-5-phosphonooxypentane-2,4-dione thiolase (291 aa).

Catalysis depends on lysine 203, which acts as the Schiff-base intermediate with substrate.

This sequence belongs to the DeoC/FbaB aldolase family. In terms of assembly, homodecamer.

The protein resides in the cytoplasm. The enzyme catalyses dihydroxyacetone phosphate + acetyl-CoA = 3-hydroxy-2,4-dioxopentyl phosphate + CoA. Its function is as follows. Involved in the degradation of phospho-AI-2, thereby terminating induction of the lsr operon and closing the AI-2 signaling cycle. Catalyzes the transfer of an acetyl moiety from 3-hydroxy-5-phosphonooxypentane-2,4-dione to CoA to form glycerone phosphate and acetyl-CoA. The sequence is that of 3-hydroxy-5-phosphonooxypentane-2,4-dione thiolase from Yersinia enterocolitica serotype O:8 / biotype 1B (strain NCTC 13174 / 8081).